Consider the following 245-residue polypeptide: Adenosylcobinamide-GDP ribazoletransferase (245 aa).

6 helical membrane-spanning segments follow: residues 35-55 (WFPL…ALGL), 108-128 (IGAF…IGAH), 137-157 (GVLI…AALV), 176-196 (IAIG…TPVM), 197-217 (TTVT…HLAR), and 222-242 (INGD…LLAA).

It belongs to the CobS family. Requires Mg(2+) as cofactor.

Its subcellular location is the cell inner membrane. It catalyses the reaction alpha-ribazole + adenosylcob(III)inamide-GDP = adenosylcob(III)alamin + GMP + H(+). The catalysed reaction is alpha-ribazole 5'-phosphate + adenosylcob(III)inamide-GDP = adenosylcob(III)alamin 5'-phosphate + GMP + H(+). The protein operates within cofactor biosynthesis; adenosylcobalamin biosynthesis; adenosylcobalamin from cob(II)yrinate a,c-diamide: step 7/7. Joins adenosylcobinamide-GDP and alpha-ribazole to generate adenosylcobalamin (Ado-cobalamin). Also synthesizes adenosylcobalamin 5'-phosphate from adenosylcobinamide-GDP and alpha-ribazole 5'-phosphate. The chain is Adenosylcobinamide-GDP ribazoletransferase from Nitratidesulfovibrio vulgaris (strain DP4) (Desulfovibrio vulgaris).